Reading from the N-terminus, the 537-residue chain is Phosphoenolpyruvate carboxykinase (ATP) (537 aa).

Arginine 61, tyrosine 195, and lysine 201 together coordinate substrate. ATP contacts are provided by residues lysine 201, histidine 220, and glycine 236–threonine 244. Positions 201 and 220 each coordinate Mn(2+). Aspartate 257 lines the Mn(2+) pocket. ATP contacts are provided by glutamate 285, arginine 323, and threonine 448. Arginine 323 provides a ligand contact to substrate.

It belongs to the phosphoenolpyruvate carboxykinase (ATP) family. Mn(2+) serves as cofactor.

Its subcellular location is the cytoplasm. It catalyses the reaction oxaloacetate + ATP = phosphoenolpyruvate + ADP + CO2. It functions in the pathway carbohydrate biosynthesis; gluconeogenesis. Functionally, involved in the gluconeogenesis. Catalyzes the conversion of oxaloacetate (OAA) to phosphoenolpyruvate (PEP) through direct phosphoryl transfer between the nucleoside triphosphate and OAA. The sequence is that of Phosphoenolpyruvate carboxykinase (ATP) from Rhodopseudomonas palustris (strain TIE-1).